The sequence spans 127 residues: Small ribosomal subunit protein uS13 (127 aa).

The disordered stretch occupies residues 90–127 (RRHRQGLPVRGQRTRTNARTRRGRRLTVAGKKKTPAKK). Residues 101–127 (QRTRTNARTRRGRRLTVAGKKKTPAKK) show a composition bias toward basic residues.

It belongs to the universal ribosomal protein uS13 family. In terms of assembly, part of the 30S ribosomal subunit. Forms a loose heterodimer with protein S19. Forms two bridges to the 50S subunit in the 70S ribosome.

Its function is as follows. Located at the top of the head of the 30S subunit, it contacts several helices of the 16S rRNA. In the 70S ribosome it contacts the 23S rRNA (bridge B1a) and protein L5 of the 50S subunit (bridge B1b), connecting the 2 subunits; these bridges are implicated in subunit movement. Contacts the tRNAs in the A and P-sites. The protein is Small ribosomal subunit protein uS13 of Synechocystis sp. (strain ATCC 27184 / PCC 6803 / Kazusa).